The sequence spans 632 residues: Fem-3 mRNA-binding factor 2 (632 aa).

Basic residues predominate over residues methionine 1–glutamine 11. The segment at methionine 1 to glutamine 37 is disordered. Polar residues predominate over residues phenylalanine 12–methionine 35. The PUM-HD domain maps to threonine 162 to arginine 566. Pumilio repeat units lie at residues glutamate 187 to glutamate 225, glutamine 226 to lysine 264, asparagine 271 to glutamine 307, alanine 308 to valine 332, aspartate 345 to serine 384, serine 400 to glutamate 436, cysteine 438 to aspartate 473, and aspartate 484 to lysine 521. Residues methionine 609–aspartate 632 are disordered. Residues asparagine 615–aspartate 632 are compositionally biased toward low complexity.

Interacts (via C-terminus) with gld-3 isoform A in an RNA-independent manner. Interacts with dlc-1, and is required for the localization of fbf-2 to P granules. Interacts (via RNA-binding domain) with lst-1, probably displaces bound auto-inhibitory C-terminal tail and alters its RNA-binding affinity. In terms of tissue distribution, expressed specifically in the germline (at protein level).

Its subcellular location is the cytoplasm. The protein localises to the cytoplasmic granule. Its function is as follows. RNA-binding protein that binds to the consensus sequence 5'-UGUGCCAUA-3' in mRNA 3'-UTRs. Involved in the control of stem cells and sex determination in the C.elegans hermaphrodite germline. May also play a role in the hermaphrodite germline proliferation and oogenesis. By binding to the 3'-UTR, represses phosphatase lip-1 expression in the distal part of the germline mitotic zone. Binds specifically to the regulatory region of fem-3 3'-UTR and mediates the sperm/oocyte switch. Negatively regulates gld-3 expression possibly by directly binding to two sites within the gld-3 isoform b 3'-UTR. Suppresses germline tumor formation by preventing the dedifferentiation of secondary spermatocytes. C-terminal disordered region probably auto-inhibits RNA binding; auto-inhibition may be reversed by interaction with lst-1. In Caenorhabditis elegans, this protein is Fem-3 mRNA-binding factor 2.